Here is a 123-residue protein sequence, read N- to C-terminus: N(4)-acetylcytidine amidohydrolase (123 aa).

An ASCH domain is found at I6–S101. Residue K21 is the Proton acceptor of the active site. S24 functions as the Nucleophile in the catalytic mechanism. Residue E74 is the Proton donor of the active site.

The protein belongs to the N(4)-acetylcytidine amidohydrolase family.

It carries out the reaction N(4)-acetylcytidine + H2O = cytidine + acetate + H(+). It catalyses the reaction N(4)-acetyl-2'-deoxycytidine + H2O = 2'-deoxycytidine + acetate + H(+). The catalysed reaction is N(4)-acetylcytosine + H2O = cytosine + acetate + H(+). Functionally, catalyzes the hydrolysis of N(4)-acetylcytidine (ac4C). The protein is N(4)-acetylcytidine amidohydrolase of Haemophilus influenzae (strain ATCC 51907 / DSM 11121 / KW20 / Rd).